The sequence spans 270 residues: Formamidopyrimidine-DNA glycosylase (270 aa).

The Schiff-base intermediate with DNA role is filled by proline 2. Glutamate 3 functions as the Proton donor in the catalytic mechanism. Catalysis depends on lysine 58, which acts as the Proton donor; for beta-elimination activity. DNA-binding residues include histidine 91, arginine 110, and arginine 151. The segment at 236-270 (FVYGRGGQPCKVCGTALREVKLGQRASVYCPRCQR) adopts an FPG-type zinc-finger fold. Catalysis depends on arginine 260, which acts as the Proton donor; for delta-elimination activity.

The protein belongs to the FPG family. Monomer. Zn(2+) is required as a cofactor.

The catalysed reaction is Hydrolysis of DNA containing ring-opened 7-methylguanine residues, releasing 2,6-diamino-4-hydroxy-5-(N-methyl)formamidopyrimidine.. It catalyses the reaction 2'-deoxyribonucleotide-(2'-deoxyribose 5'-phosphate)-2'-deoxyribonucleotide-DNA = a 3'-end 2'-deoxyribonucleotide-(2,3-dehydro-2,3-deoxyribose 5'-phosphate)-DNA + a 5'-end 5'-phospho-2'-deoxyribonucleoside-DNA + H(+). In terms of biological role, involved in base excision repair of DNA damaged by oxidation or by mutagenic agents. Acts as a DNA glycosylase that recognizes and removes damaged bases. Has a preference for oxidized purines, such as 7,8-dihydro-8-oxoguanine (8-oxoG). Has AP (apurinic/apyrimidinic) lyase activity and introduces nicks in the DNA strand. Cleaves the DNA backbone by beta-delta elimination to generate a single-strand break at the site of the removed base with both 3'- and 5'-phosphates. This chain is Formamidopyrimidine-DNA glycosylase, found in Pseudomonas putida (strain GB-1).